The following is a 197-amino-acid chain: Xanthine phosphoribosyltransferase (197 aa).

Residues L20 and N27 each contribute to the xanthine site. Position 128–132 (128–132) interacts with 5-phospho-alpha-D-ribose 1-diphosphate; sequence ANGQA. K156 contacts xanthine.

Belongs to the purine/pyrimidine phosphoribosyltransferase family. Xpt subfamily. Homodimer.

The protein localises to the cytoplasm. The enzyme catalyses XMP + diphosphate = xanthine + 5-phospho-alpha-D-ribose 1-diphosphate. It participates in purine metabolism; XMP biosynthesis via salvage pathway; XMP from xanthine: step 1/1. In terms of biological role, converts the preformed base xanthine, a product of nucleic acid breakdown, to xanthosine 5'-monophosphate (XMP), so it can be reused for RNA or DNA synthesis. The protein is Xanthine phosphoribosyltransferase of Bacillus cereus (strain B4264).